We begin with the raw amino-acid sequence, 666 residues long: DNA-directed RNA polymerase III subunit rpc3 (666 aa).

Disordered stretches follow at residues 130 to 153 (HEPH…VHSY) and 375 to 455 (SRLD…TESR). Polar residues predominate over residues 135–153 (NGNSNETNGATNGNGVHSY). The segment at 593 to 614 (TYKAMSRCLQRLDVEKRRKANI) is leucine-zipper.

Belongs to the RNA polymerase beta chain family. Component of the RNA polymerase III (Pol III) complex consisting of 17 subunits.

The protein localises to the nucleus. Its function is as follows. DNA-dependent RNA polymerase catalyzes the transcription of DNA into RNA using the four ribonucleoside triphosphates as substrates. Specific core component of RNA polymerase III which synthesizes small RNAs, such as 5S rRNA and tRNAs. This is DNA-directed RNA polymerase III subunit rpc3 (rpc82) from Botryotinia fuckeliana (strain B05.10) (Noble rot fungus).